Reading from the N-terminus, the 81-residue chain is Photosystem I iron-sulfur center (81 aa).

4Fe-4S ferredoxin-type domains lie at 2–31 (SHSV…MIPW) and 39–68 (IASA…VRVY). Residues C11, C14, C17, C21, C48, C51, C54, and C58 each coordinate [4Fe-4S] cluster.

In terms of assembly, the eukaryotic PSI reaction center is composed of at least 11 subunits. Requires [4Fe-4S] cluster as cofactor.

The protein resides in the plastid. The protein localises to the chloroplast thylakoid membrane. The catalysed reaction is reduced [plastocyanin] + hnu + oxidized [2Fe-2S]-[ferredoxin] = oxidized [plastocyanin] + reduced [2Fe-2S]-[ferredoxin]. Functionally, apoprotein for the two 4Fe-4S centers FA and FB of photosystem I (PSI); essential for photochemical activity. FB is the terminal electron acceptor of PSI, donating electrons to ferredoxin. The C-terminus interacts with PsaA/B/D and helps assemble the protein into the PSI complex. Required for binding of PsaD and PsaE to PSI. PSI is a plastocyanin-ferredoxin oxidoreductase, converting photonic excitation into a charge separation, which transfers an electron from the donor P700 chlorophyll pair to the spectroscopically characterized acceptors A0, A1, FX, FA and FB in turn. The protein is Photosystem I iron-sulfur center of Phalaenopsis aphrodite subsp. formosana (Moth orchid).